The following is a 356-amino-acid chain: Fructose-bisphosphate aldolase 1, chloroplastic (356 aa).

Residues 1 to 6 (GLTIRA) constitute a chloroplast transit peptide. Residues Arg53 and Lys143 each coordinate substrate. Glu183 acts as the Proton acceptor in catalysis. The Schiff-base intermediate with dihydroxyacetone-P role is filled by Lys225.

Belongs to the class I fructose-bisphosphate aldolase family.

It is found in the plastid. It localises to the chloroplast. It catalyses the reaction beta-D-fructose 1,6-bisphosphate = D-glyceraldehyde 3-phosphate + dihydroxyacetone phosphate. It functions in the pathway carbohydrate degradation; glycolysis; D-glyceraldehyde 3-phosphate and glycerone phosphate from D-glucose: step 4/4. The protein is Fructose-bisphosphate aldolase 1, chloroplastic of Pisum sativum (Garden pea).